A 165-amino-acid polypeptide reads, in one-letter code: Thiol peroxidase (165 aa).

In terms of domain architecture, Thioredoxin spans 18–165; it reads PAVGSPAPAF…YEAALAALGA (148 aa). Cysteine 60 serves as the catalytic Cysteine sulfenic acid (-SOH) intermediate. Cysteine 60 and cysteine 93 are oxidised to a cystine.

Belongs to the peroxiredoxin family. Tpx subfamily. In terms of assembly, homodimer.

The catalysed reaction is a hydroperoxide + [thioredoxin]-dithiol = an alcohol + [thioredoxin]-disulfide + H2O. Its function is as follows. Thiol-specific peroxidase that catalyzes the reduction of hydrogen peroxide and organic hydroperoxides to water and alcohols, respectively. Plays a role in cell protection against oxidative stress by detoxifying peroxides. The protein is Thiol peroxidase of Mycobacterium bovis (strain ATCC BAA-935 / AF2122/97).